The following is a 381-amino-acid chain: Transaldolase 1 (381 aa).

Lys-149 (schiff-base intermediate with substrate) is an active-site residue.

This sequence belongs to the transaldolase family. Type 2 subfamily.

Its subcellular location is the cytoplasm. The catalysed reaction is D-sedoheptulose 7-phosphate + D-glyceraldehyde 3-phosphate = D-erythrose 4-phosphate + beta-D-fructose 6-phosphate. The protein operates within carbohydrate degradation; pentose phosphate pathway; D-glyceraldehyde 3-phosphate and beta-D-fructose 6-phosphate from D-ribose 5-phosphate and D-xylulose 5-phosphate (non-oxidative stage): step 2/3. Its function is as follows. Transaldolase is important for the balance of metabolites in the pentose-phosphate pathway. The polypeptide is Transaldolase 1 (tal1) (Streptomyces coelicolor (strain ATCC BAA-471 / A3(2) / M145)).